A 485-amino-acid chain; its full sequence is UDP-glycosyltransferase 91D1 (485 aa).

UDP-alpha-D-glucose is bound by residues Ser-296, 355 to 356 (WA), 373 to 381 (HCGSGSIVE), and 395 to 398 (FCDQ).

The protein belongs to the UDP-glycosyltransferase family.

May glycosylate diterpenes or flavonols in leaves. The chain is UDP-glycosyltransferase 91D1 from Stevia rebaudiana (Stevia).